Consider the following 127-residue polypeptide: Fluoride-specific ion channel FluC (127 aa).

4 helical membrane-spanning segments follow: residues 4–24 (SLLAIGLGAMVGAWLRWGLGM), 35–55 (PGTLLANLIGGYIIGLAIAFF), 68–88 (LLITGFCGGLTTFSTFSAEVV), and 96–116 (ILWALGSIALHVSGSLLMTAA). The Na(+) site is built by G75 and T78.

Belongs to the fluoride channel Fluc/FEX (TC 1.A.43) family.

It is found in the cell inner membrane. It catalyses the reaction fluoride(in) = fluoride(out). With respect to regulation, na(+) is not transported, but it plays an essential structural role and its presence is essential for fluoride channel function. In terms of biological role, fluoride-specific ion channel. Important for reducing fluoride concentration in the cell, thus reducing its toxicity. The polypeptide is Fluoride-specific ion channel FluC (Pseudomonas putida (strain W619)).